A 184-amino-acid polypeptide reads, in one-letter code: Endothelial cell-specific molecule 1 (184 aa).

The first 19 residues, 1–19 (MKSVLLLTTLLVPAHLVAA), serve as a signal peptide directing secretion. Positions 24-102 (YAVDCPQHCD…GEEFGICKDC (79 aa)) constitute an IGFBP N-terminal domain. Cystine bridges form between Cys28-Cys51, Cys32-Cys53, Cys37-Cys54, Cys43-Cys57, Cys65-Cys83, and Cys77-Cys99. Ser156 carries an O-linked (Xyl...) (chondroitin sulfate) serine glycan.

Monomer. In terms of processing, may contain intrachain disulfide bonds. O-glycosylated; contains chondroitin sulfate and dermatan sulfate. Expressed in lung, on the vascular capillary network within alveolar walls, and also at lower level in kidney.

It localises to the secreted. Involved in angiogenesis; promotes angiogenic sprouting. May have potent implications in lung endothelial cell-leukocyte interactions. This is Endothelial cell-specific molecule 1 (ESM1) from Homo sapiens (Human).